The primary structure comprises 687 residues: Glycine--tRNA ligase beta subunit (687 aa).

This sequence belongs to the class-II aminoacyl-tRNA synthetase family. As to quaternary structure, tetramer of two alpha and two beta subunits.

The protein resides in the cytoplasm. It carries out the reaction tRNA(Gly) + glycine + ATP = glycyl-tRNA(Gly) + AMP + diphosphate. This Neisseria gonorrhoeae (strain ATCC 700825 / FA 1090) protein is Glycine--tRNA ligase beta subunit.